The primary structure comprises 998 residues: 2-imino-3-(indol-3-yl)propanoate dimerase (998 aa).

It carries out the reaction 2 H2O2 = O2 + 2 H2O. The enzyme catalyses 2 2-iminio-3-(indol-3-yl)propanoate + H2O2 = indole-3-pyruvate imine dimer + 2 H2O. Its pathway is pigment biosynthesis; violacein biosynthesis. In terms of biological role, catalyzes the hydrogen peroxide-dependent dimerization of two L-tryptophan-derived molecules (imine form of indole 3-pyruvate (IPA)), to form an uncharacterized product suggested to be indole-3-pyruvate imine dimer that can spontaneously convert into dichlorochromopyrrolate (CPA). The uncharacterized product is the substrate of VioE. The polypeptide is 2-imino-3-(indol-3-yl)propanoate dimerase (vioB) (Chromobacterium violaceum (strain ATCC 12472 / DSM 30191 / JCM 1249 / CCUG 213 / NBRC 12614 / NCIMB 9131 / NCTC 9757 / MK)).